A 147-amino-acid chain; its full sequence is Transcriptional regulator MraZ (147 aa).

SpoVT-AbrB domains are found at residues 5–50 (AVAL…PLTA) and 79–122 (AQEE…SDAG).

This sequence belongs to the MraZ family. Forms oligomers.

The protein resides in the cytoplasm. It is found in the nucleoid. This Azoarcus sp. (strain BH72) protein is Transcriptional regulator MraZ.